Here is a 368-residue protein sequence, read N- to C-terminus: Caffeine synthase 3 (368 aa).

Residue Y23 coordinates S-adenosyl-L-homocysteine. T30 is a binding site for caffeine. S-adenosyl-L-homocysteine contacts are provided by C65, N70, D102, L103, S137, and F138. Caffeine is bound by residues Y155, H158, and W159. Position 176 (N176) interacts with Mg(2+). A caffeine-binding site is contributed by R224. Residues D262, F264, and N265 each coordinate Mg(2+). F320 is a caffeine binding site.

Belongs to the methyltransferase superfamily. Type-7 methyltransferase family. The cofactor is Mg(2+).

It catalyses the reaction theobromine + S-adenosyl-L-methionine = caffeine + S-adenosyl-L-homocysteine + H(+). It carries out the reaction 7-methylxanthine + S-adenosyl-L-methionine = theobromine + S-adenosyl-L-homocysteine + H(+). Its pathway is alkaloid biosynthesis. In terms of biological role, involved in the biosynthesis of caffeine. Catalyzes the conversion of 7-methylxanthine (7mX) to theobromine and of theobromine to caffeine. This Camellia sinensis (Tea plant) protein is Caffeine synthase 3.